A 113-amino-acid chain; its full sequence is Small ribosomal subunit protein uS15 (113 aa).

It belongs to the universal ribosomal protein uS15 family. Part of the 30S ribosomal subunit. Forms a bridge to the 50S subunit in the 70S ribosome, contacting the 23S rRNA.

Functionally, one of the primary rRNA binding proteins, it binds directly to 16S rRNA where it helps nucleate assembly of the platform of the 30S subunit by binding and bridging several RNA helices of the 16S rRNA. In terms of biological role, forms an intersubunit bridge (bridge B4) with the 23S rRNA of the 50S subunit in the ribosome. The chain is Small ribosomal subunit protein uS15 from Haemophilus influenzae (strain PittEE).